A 292-amino-acid chain; its full sequence is Ubiquinone biosynthesis protein UbiV (292 aa).

[4Fe-4S] cluster contacts are provided by C39, C180, C193, and C197.

The protein belongs to the peptidase U32 family. UbiV subfamily. In terms of assembly, forms a heterodimer with UbiU. [4Fe-4S] cluster serves as cofactor.

Its pathway is cofactor biosynthesis; ubiquinone biosynthesis. In terms of biological role, required for O(2)-independent ubiquinone (coenzyme Q) biosynthesis. Together with UbiU, is essential for the C6-hydroxylation reaction in the oxygen-independent ubiquinone biosynthesis pathway. In Escherichia coli (strain K12), this protein is Ubiquinone biosynthesis protein UbiV.